Here is a 181-residue protein sequence, read N- to C-terminus: ATP-dependent protease subunit HslV (181 aa).

The active site involves Thr-7. Residues Ala-162, Cys-165, and Thr-168 each contribute to the Na(+) site.

It belongs to the peptidase T1B family. HslV subfamily. As to quaternary structure, a double ring-shaped homohexamer of HslV is capped on each side by a ring-shaped HslU homohexamer. The assembly of the HslU/HslV complex is dependent on binding of ATP.

The protein localises to the cytoplasm. It carries out the reaction ATP-dependent cleavage of peptide bonds with broad specificity.. Allosterically activated by HslU binding. In terms of biological role, protease subunit of a proteasome-like degradation complex believed to be a general protein degrading machinery. The chain is ATP-dependent protease subunit HslV from Coxiella burnetii (strain RSA 331 / Henzerling II).